The primary structure comprises 523 residues: GMP synthase [glutamine-hydrolyzing] (523 aa).

In terms of domain architecture, Glutamine amidotransferase type-1 spans 8–205; that stretch reads KILILDFGSQ…VVNICGCTTN (198 aa). Cys85 (nucleophile) is an active-site residue. Active-site residues include His179 and Glu181. One can recognise a GMPS ATP-PPase domain in the interval 206-398; it reads WTPENIIEDA…LGLPAEMLNR (193 aa). An ATP-binding site is contributed by 233–239; sequence SGGVDSS.

As to quaternary structure, homodimer.

The catalysed reaction is XMP + L-glutamine + ATP + H2O = GMP + L-glutamate + AMP + diphosphate + 2 H(+). The protein operates within purine metabolism; GMP biosynthesis; GMP from XMP (L-Gln route): step 1/1. Catalyzes the synthesis of GMP from XMP. The protein is GMP synthase [glutamine-hydrolyzing] of Mannheimia succiniciproducens (strain KCTC 0769BP / MBEL55E).